The sequence spans 308 residues: Phenylcoumaran benzylic ether reductase Pyrc5 (308 aa).

NADP(+) is bound by residues 11–17 (GGTGYIG), Arg-36, and Lys-45. Catalysis depends on Lys-133, which acts as the Proton acceptor. Residue Arg-137 participates in NADP(+) binding.

Belongs to the NmrA-type oxidoreductase family. Isoflavone reductase subfamily.

The catalysed reaction is (-)-dehydrodiconiferyl alcohol + NADPH + H(+) = (S)-isodihydrodehydrodiconiferyl alcohol + NADP(+). It catalyses the reaction (+)-dehydrodiconiferyl alcohol + NADPH + H(+) = (R)-isodihydrodehydrodiconiferyl alcohol + NADP(+). Its function is as follows. Oxidoreductase involved in lignan biosynthesis. Catalyzes the NADPH-dependent reduction of phenylcoumaran benzylic ethers. Converts dehydrodiconiferyl alcohol (DDC) to isodihydrodehydrodiconiferyl alcohol (IDDDC). This Pyrus communis (Pear) protein is Phenylcoumaran benzylic ether reductase Pyrc5.